The primary structure comprises 498 residues: Galactose-1-phosphate uridylyltransferase (498 aa).

It belongs to the galactose-1-phosphate uridylyltransferase type 2 family.

It is found in the cytoplasm. The catalysed reaction is alpha-D-galactose 1-phosphate + UDP-alpha-D-glucose = alpha-D-glucose 1-phosphate + UDP-alpha-D-galactose. It participates in carbohydrate metabolism; galactose metabolism. The polypeptide is Galactose-1-phosphate uridylyltransferase (Clostridium perfringens (strain 13 / Type A)).